We begin with the raw amino-acid sequence, 413 residues long: Peptidase T (413 aa).

His82 provides a ligand contact to Zn(2+). Residue Asp84 is part of the active site. Asp145 provides a ligand contact to Zn(2+). Catalysis depends on Glu179, which acts as the Proton acceptor. Residues Glu180, Asp202, and His384 each coordinate Zn(2+).

The protein belongs to the peptidase M20B family. Zn(2+) is required as a cofactor.

Its subcellular location is the cytoplasm. It catalyses the reaction Release of the N-terminal residue from a tripeptide.. Functionally, cleaves the N-terminal amino acid of tripeptides. The sequence is that of Peptidase T from Latilactobacillus sakei subsp. sakei (strain 23K) (Lactobacillus sakei subsp. sakei).